Consider the following 505-residue polypeptide: Phosphoglycerate kinase, glycosomal (505 aa).

The (2R)-3-phosphoglycerate site is built by valine 29, aspartate 30, phenylalanine 31, asparagine 32, arginine 45, serine 67, histidine 68, glycine 70, arginine 71, leucine 219, arginine 220, histidine 256, and arginine 257. Residues glycine 302 and alanine 303 each coordinate ADP. Glycine 302 lines the CDP pocket. AMP contacts are provided by alanine 303 and lysine 304. Residue alanine 303 coordinates ATP. A Mg(2+)-binding site is contributed by alanine 303. A (2R)-3-phosphoglycerate-binding site is contributed by lysine 304. CDP is bound at residue aspartate 307. Aspartate 307 is a Mg(2+) binding site. Positions 308 and 326 each coordinate ADP. Lysine 308 provides a ligand contact to AMP. Lysine 308 contributes to the ATP binding site. A CDP-binding site is contributed by glycine 326. Residues glycine 327 and glycine 399 each coordinate AMP. Residues glycine 327 and glycine 399 each contribute to the ATP site. ADP-binding residues include glycine 399 and asparagine 423. Positions 424, 426, and 429 each coordinate CDP. 4 residues coordinate ADP: phenylalanine 429, glutamate 430, aspartate 462, and threonine 463. Glutamate 430 serves as a coordination point for AMP. Residues glutamate 430, aspartate 462, and threonine 463 each contribute to the ATP site. Aspartate 462 is a Mg(2+) binding site.

The protein belongs to the phosphoglycerate kinase family. As to quaternary structure, monomer. It depends on Mg(2+) as a cofactor.

Its subcellular location is the glycosome. The catalysed reaction is (2R)-3-phosphoglycerate + ATP = (2R)-3-phospho-glyceroyl phosphate + ADP. Its pathway is carbohydrate degradation; glycolysis; pyruvate from D-glyceraldehyde 3-phosphate: step 2/5. This chain is Phosphoglycerate kinase, glycosomal (PGKA), found in Crithidia fasciculata.